A 38-amino-acid polypeptide reads, in one-letter code: Defensin-1 (38 aa).

3 disulfide bridges follow: C4–C25, C11–C33, and C15–C35.

The protein resides in the secreted. In terms of biological role, has antibacterial activity against the Gram-positive bacteria L.lactis and S.aureus, and against the Gram-negative bacteria E.coli D32 and V.parahemolyticus. The sequence is that of Defensin-1 from Crassostrea virginica (Eastern oyster).